Consider the following 1550-residue polypeptide: DNA excision repair protein ERCC-6-like 2 (1550 aa).

Residues 1 to 23 (MDPSAPQPRAETSGKDIWHPGER) are disordered. Residues 12 to 22 (TSGKDIWHPGE) show a composition bias toward basic and acidic residues. The region spanning 135–321 (YGHYIHGGGC…WCVMDWAVPG (187 aa)) is the Helicase ATP-binding domain. 148–155 (DDMGLGKT) contacts ATP. Positions 272–275 (DEAH) match the DEAH box motif. The Helicase C-terminal domain occupies 512-662 (VLQQLLNHCR…CVVVGSENAK (151 aa)). The Atypical PIP-box motif lies at 785–796 (PGQLTLLQCGFS). 3 disordered regions span residues 808 to 848 (DSDG…TSKH), 914 to 1002 (FPDN…SSLR), and 1354 to 1410 (AETK…TRTG). 2 stretches are compositionally biased toward basic and acidic residues: residues 830 to 840 (EAKDAGCEKNQ) and 933 to 953 (TEHT…DKRN). Phosphoserine occurs at positions 980 and 983. Over residues 992–1002 (SRVRKRASSLR) the composition is skewed to basic residues. Positions 1359–1388 (SPVSSTQEIDSGKNSQASEDTVTSRSLNSE) are enriched in polar residues. 2 positions are modified to phosphoserine: S1373 and S1376. Residues 1389-1405 (SETRERRLENTMKDQQD) show a composition bias toward basic and acidic residues.

It belongs to the SNF2/RAD54 helicase family. Interacts with NEK6. Interacts (via an atypical PIP-box) with PCNA; this interaction facilitates cenrtomeric localization of ERCC6L2. Interacts with CYREN; this interaction is DNA independent. Interacts with XRCC6 and XRCC5. Phosphorylated by NEK6. In terms of tissue distribution, expressed in bone marrow (at protein level).

It localises to the nucleus. The protein localises to the cytoplasm. The protein resides in the cytoskeleton. It is found in the microtubule organizing center. Its subcellular location is the centrosome. It localises to the mitochondrion. The protein localises to the chromosome. The protein resides in the centromere. Its function is as follows. Promotes double-strand break (DSB) end-joining and facilitates programmed recombination by controlling how DNA ends are joined in a spatially oriented manner during repair. Also plays a role in DNA repair by restricting DNA end resection in double strand break (DSB) repair. Facilitates replication of complex DNA regions and regulates the maintenance of chromatin structure. This Homo sapiens (Human) protein is DNA excision repair protein ERCC-6-like 2.